We begin with the raw amino-acid sequence, 197 residues long: Putative carbonic anhydrase YvdA (197 aa).

Zn(2+)-binding residues include Cys-41, Asp-43, His-99, and Cys-102.

Belongs to the beta-class carbonic anhydrase family. Requires Zn(2+) as cofactor.

It catalyses the reaction hydrogencarbonate + H(+) = CO2 + H2O. Functionally, reversible hydration of carbon dioxide. This chain is Putative carbonic anhydrase YvdA (yvdA), found in Bacillus subtilis (strain 168).